The following is a 544-amino-acid chain: Zinc finger and BTB domain-containing protein 7B (544 aa).

Positions 34 to 115 (CDLTIRTQGL…AYTATLTTSS (82 aa)) constitute a BTB domain. A Phosphoserine modification is found at Ser150. Disordered stretches follow at residues 171 to 221 (TTAS…ARAN) and 244 to 314 (GRLG…EDPI). Over residues 186–200 (PQVPLLPPPPPPPRP) the composition is skewed to pro residues. Basic residues predominate over residues 201–210 (VARRSRKPRK). 2 positions are modified to N6-acetyllysine; by EP300; alternate: Lys210 and Lys216. Glycyl lysine isopeptide (Lys-Gly) (interchain with G-Cter in ubiquitin); alternate cross-links involve residues Lys210 and Lys216. The segment covering 277–286 (FEGEEEEEEM) has biased composition (acidic residues). Lys339 carries the N6-acetyllysine; by EP300; alternate modification. Lys339 is covalently cross-linked (Glycyl lysine isopeptide (Lys-Gly) (interchain with G-Cter in ubiquitin); alternate). The required for interaction with and acetylation by EP300 stretch occupies residues 348–404 (MPQECPVCHKIIHGAGKLPRHMRTHTGEKPFACEVCGVRFTRNDKLKIHMRKHTGER). Residues 350 to 372 (QECPVCHKIIHGAGKLPRHMRTH) form a C2H2-type 1 zinc finger. A Phosphothreonine modification is found at Thr373. 2 C2H2-type zinc fingers span residues 378–400 (FACE…MRKH) and 406–428 (YSCP…MHLH). Residues 434 to 458 (YECHLCHKAFAKEDHLQRHLKGQNC) form a C2H2-type 4; atypical zinc finger. 2 disordered regions span residues 465 to 493 (RRRK…DLSN) and 507 to 544 (WEQS…MESS). Composition is skewed to low complexity over residues 511–522 (ATTGPPVTTQGP) and 531–544 (TPTT…MESS).

In terms of assembly, homodimerizes. Interacts with NCL, NEDD4 and YBX1. Interacts with HNRNPU (via RNA-binding RGG-box region); the interaction facilitates the recruitment of long non-coding RNA Blnc1 by ZBTB7B. Interacts with HDAC4 and HDAC5; the interaction allows the recruitment of HDAC4 and HDAC5 on CD8 loci for deacetylation and possible inhibition of CD8 genes expression. Post-translationally, acetylated directly and specifically by EP300. EP300-mediated acetylation of Lys-210, Lys-216 and Lys-339 stabilizes the protein by antagonizing ubiquitin conjugation. In terms of processing, ubiquitinated, leading to proteasomal degradation. Competes with acetylation on Lys-210, Lys-216 and Lys-339. In terms of tissue distribution, widely expressed, with a higher level in skin. Expressed in thymus. Restricted to CD4 cells (mature single positive CD4(+) and intermediate CD4(+)CD8(+) cells). Expressed in the luminal epithelial cells in the mammary glands where is up-regulated at late pregnancy and lactation. Expression is enriched in brown fat.

The protein resides in the nucleus. In terms of biological role, transcription regulator that acts as a key regulator of lineage commitment of immature T-cell precursors. Exerts distinct biological functions in the mammary epithelial cells and T cells in a tissue-specific manner. Necessary and sufficient for commitment of CD4 lineage, while its absence causes CD8 commitment. Development of immature T-cell precursors (thymocytes) to either the CD4 helper or CD8 killer T-cell lineages correlates precisely with their T-cell receptor specificity for major histocompatibility complex class II or class I molecules, respectively. Cross-antagonism between ZBTB7B and CBF complexes are determinative to CD4 versus CD8 cell fate decision. Suppresses RUNX3 expression and imposes CD4+ lineage fate by inducing the SOCS suppressors of cytokine signaling. induces, as a transcriptional activator, SOCS genes expression which represses RUNX3 expression and promotes the CD4+ lineage fate. During CD4 lineage commitment, associates with multiple sites at the CD8 locus, acting as a negative regulator of the CD8 promoter and enhancers by epigenetic silencing through the recruitment of class II histone deacetylases, such as HDAC4 and HDAC5, to these loci. Regulates the development of IL17-producing CD1d-restricted naural killer (NK) T cells. Also functions as an important metabolic regulator in the lactating mammary glands. Critical feed-forward regulator of insulin signaling in mammary gland lactation, directly regulates expression of insulin receptor substrate-1 (IRS-1) and insulin-induced Akt-mTOR-SREBP signaling. Transcriptional repressor of the collagen COL1A1 and COL1A2 genes. May also function as a repressor of fibronectin and possibly other extracellular matrix genes. Potent driver of brown fat development, thermogenesis and cold-induced beige fat formation. Recruits the brown fat lncRNA 1 (Blnc1):HNRNPU ribonucleoprotein complex to activate thermogenic gene expression in brown and beige adipocytes. The sequence is that of Zinc finger and BTB domain-containing protein 7B from Mus musculus (Mouse).